The sequence spans 294 residues: Protein ATC1/LIC4 (294 aa).

A disordered region spans residues 114–178; it reads YTGKASLDKS…SSSLASSDAN (65 aa). The segment covering 130–145 has biased composition (basic and acidic residues); the sequence is HKPDKEQKNYKIDKPT. Residues 153–175 are compositionally biased toward low complexity; it reads LKTTNEPMLSPASLSPSSSLASS.

Its subcellular location is the cytoplasm. The protein resides in the nucleus. Functionally, involved in cation homeostasis and in the regulation of the cation stress signaling cascades. Also involved in bipolar budding. In Saccharomyces cerevisiae (strain ATCC 204508 / S288c) (Baker's yeast), this protein is Protein ATC1/LIC4 (ATC1).